The sequence spans 84 residues: Beta-cardiotoxin CTX15 (84 aa).

An N-terminal signal peptide occupies residues 1-21 (MKTLLLTLVVVTIVCLDLGYT). Cystine bridges form between cysteine 24/cysteine 43, cysteine 36/cysteine 61, cysteine 65/cysteine 76, and cysteine 77/cysteine 82.

This sequence belongs to the three-finger toxin family. Short-chain subfamily. Aminergic toxin sub-subfamily. In terms of tissue distribution, expressed by the venom gland.

It localises to the secreted. Functionally, acts as a beta-blocker by binding to beta-1 and beta-2 adrenergic receptors (ADRB1 and ADRB2). It dose-dependently decreases the heart rate (bradycardia), whereas conventional cardiotoxins increases it. At 100 mg/kg, intraperitoneal injection into mice provokes labored breathing, impaired locomotion, lack of response to external stimuli, and death (after 30 minutes). The chain is Beta-cardiotoxin CTX15 from Ophiophagus hannah (King cobra).